The chain runs to 125 residues: Ixonnexin (125 aa).

An N-terminal signal peptide occupies residues 1 to 21; the sequence is MGLTGTTLVLVCVAFFGSAAA. Residue asparagine 26 is glycosylated (N-linked (GlcNAc...) asparagine). The disordered stretch occupies residues 81-125; it reads TSSGGPDDTGDNTPPPTEKPKQKKKKPKKTKKPKRKSKKDQKENF. Residues 101 to 119 are compositionally biased toward basic residues; it reads KQKKKKPKKTKKPKRKSKK.

The protein belongs to the salp14 family. Homodimer. Interacts with host PLG. Interacts with host PLAT. Saliva (at protein level).

The protein resides in the secreted. In terms of biological role, salivary protein that promotes host fibrinolysis via accelerating host plasmin generation from plasminogen (PLG) initiated by tPA/tissue-type plasminogen activator (PLAT). Does not affect urokinase (PLAU)-mediated fibrinolysis in the host. Enhances amidolytic activity of host coagulation factor Xa (F10). The chain is Ixonnexin from Ixodes scapularis (Black-legged tick).